The primary structure comprises 185 residues: MISDLKKTTEQKMQKSIDALKTDLAKIRTGRAHTGLLDHVMVEYYGSMVPINQVANITLIDARTIGVQTWEKPMLGKVEKAIRDCDLGLNPANMGEIIRVPMPALTEERRRDLTKVVRQEGETAKVAVRNLRRDANQHLKDAVKDKTISEDDERRSQDDIQKLTDKYVAEIDKLLAQKEQELMQI.

It belongs to the RRF family.

The protein localises to the cytoplasm. Responsible for the release of ribosomes from messenger RNA at the termination of protein biosynthesis. May increase the efficiency of translation by recycling ribosomes from one round of translation to another. This is Ribosome-recycling factor from Azoarcus sp. (strain BH72).